We begin with the raw amino-acid sequence, 553 residues long: Zinc finger protein 324A (553 aa).

The KRAB domain occupies 1-72 (MAFEDVAVYF…SGTDTTLSRT (72 aa)). The Nuclear localization signal motif lies at 130–135 (PSRERK). Positions 186 to 221 (GRQPRTPERQKPCAQEVPGRTFGSAQDLEAAGGRGH) are disordered. 9 consecutive C2H2-type zinc fingers follow at residues 257-279 (FECR…LRTH), 285-307 (YECA…QRIH), 313-335 (YACP…QRIH), 341-363 (FRCS…RKIH), 369-391 (YACA…ERTH), 397-419 (FVCA…QRVH), 425-447 (FACP…QLLH), 453-475 (FRCV…RRIH), and 481-503 (FVCT…QRIH). The disordered stretch occupies residues 502–553 (IHTGEKTVRRSRASLHPQARSVAGASSEGAPAKETEPTPASGPAAVSQPAEV).

It belongs to the krueppel C2H2-type zinc-finger protein family. In terms of tissue distribution, expressed at high levels in the spleen, thymus, and PBMC, at low levels in the prostate, ovary, small intestine, colon (mucosal lining), placenta, lung, and pancreas, and very weakly expressed in the liver and kidney.

It is found in the nucleus. Functionally, may be involved in transcriptional regulation. May be involved in regulation of cell proliferation. The polypeptide is Zinc finger protein 324A (ZNF324) (Homo sapiens (Human)).